Reading from the N-terminus, the 176-residue chain is NAD(P)H-quinone oxidoreductase subunit 6, chloroplastic (176 aa).

Helical transmembrane passes span F10 to T30, I33 to A53, L63 to G83, I105 to W125, and F152 to A172.

Belongs to the complex I subunit 6 family. As to quaternary structure, NDH is composed of at least 16 different subunits, 5 of which are encoded in the nucleus.

It localises to the plastid. Its subcellular location is the chloroplast thylakoid membrane. It carries out the reaction a plastoquinone + NADH + (n+1) H(+)(in) = a plastoquinol + NAD(+) + n H(+)(out). It catalyses the reaction a plastoquinone + NADPH + (n+1) H(+)(in) = a plastoquinol + NADP(+) + n H(+)(out). Functionally, NDH shuttles electrons from NAD(P)H:plastoquinone, via FMN and iron-sulfur (Fe-S) centers, to quinones in the photosynthetic chain and possibly in a chloroplast respiratory chain. The immediate electron acceptor for the enzyme in this species is believed to be plastoquinone. Couples the redox reaction to proton translocation, and thus conserves the redox energy in a proton gradient. The sequence is that of NAD(P)H-quinone oxidoreductase subunit 6, chloroplastic (ndhG) from Spinacia oleracea (Spinach).